Consider the following 515-residue polypeptide: NADH-quinone oxidoreductase subunit N (515 aa).

Transmembrane regions (helical) follow at residues 14–34 (ITPILVILGAACLGVLVEAFL), 40–60 (WSAQVGLSLLALVAAGVALAL), 80–100 (APTLFLWGTLLALGLGAILLI), 138–158 (TEVFPLALFALGGMMVFCAAN), 160–180 (LLTMFIALEVLSLPLYLMCGL), 195–215 (YFLLGAFASAFFLYGLALLYG), 239–259 (LFAGLGLLVVGLLFKASVGPF), 271–291 (PTAVTGFMAACTKVAAFGGIL), 307–327 (GVLYAVAIVSMAIGVVLGLTQ), 333–353 (MIAYSSVAHAGFLLVGSIALT), 361–381 (MFYLLAYGFTTIAIFGVISLV), 404–424 (VAWVFTFLLLALAGIPMTSGF), 438–458 (GMAPLVVVALVASAVAAFFYL), and 485–505 (AAITLGVVVTLLLGVLPSLAL).

It belongs to the complex I subunit 2 family. NDH-1 is composed of 14 different subunits. Subunits NuoA, H, J, K, L, M, N constitute the membrane sector of the complex.

The protein resides in the cell membrane. It catalyses the reaction a quinone + NADH + 5 H(+)(in) = a quinol + NAD(+) + 4 H(+)(out). Its function is as follows. NDH-1 shuttles electrons from NADH, via FMN and iron-sulfur (Fe-S) centers, to quinones in the respiratory chain. The immediate electron acceptor for the enzyme in this species is believed to be a menaquinone. Couples the redox reaction to proton translocation (for every two electrons transferred, four hydrogen ions are translocated across the cytoplasmic membrane), and thus conserves the redox energy in a proton gradient. The polypeptide is NADH-quinone oxidoreductase subunit N (Saccharopolyspora erythraea (strain ATCC 11635 / DSM 40517 / JCM 4748 / NBRC 13426 / NCIMB 8594 / NRRL 2338)).